The chain runs to 667 residues: Cysteine-rich receptor-like protein kinase 11 (667 aa).

The signal sequence occupies residues 1 to 24; that stretch reads MKQRSLFSVLCFFFISFGVASVSA. 2 consecutive Gnk2-homologous domains span residues 25–129 and 135–248; these read QTCT…NTSF and LNPR…LYTY. Topologically, residues 25-292 are extracellular; that stretch reads QTCTTDKGTF…SKGISAGVVV (268 aa). N-linked (GlcNAc...) asparagine glycosylation is found at N37, N54, N64, N106, N126, N150, and N254. The span at 259–268 shows a compositional bias: pro residues; sequence SPPPEPPVTV. A disordered region spans residues 259–282; it reads SPPPEPPVTVPQPAGDQDNPTNND. An N-linked (GlcNAc...) asparagine glycan is attached at N281. Residues 293–313 form a helical membrane-spanning segment; it reads AITVPTVIAILILLVLGFVLF. Residues 314–667 are Cytoplasmic-facing; the sequence is RRRKSYQRTK…YTSKSSSFSS (354 aa). The Protein kinase domain maps to 350–629; sequence FSTSNKLGEG…IILMLTSNTI (280 aa). Residues 356-364 and K378 each bind ATP; that span reads LGEGGFGAV. A Phosphotyrosine modification is found at Y423. The active-site Proton acceptor is the D475. The residue at position 479 (S479) is a Phosphoserine. T515 is modified (phosphothreonine). Y523 carries the post-translational modification Phosphotyrosine.

Belongs to the protein kinase superfamily. Ser/Thr protein kinase family. CRK subfamily. Detected in root, stem, leaf and flower.

It localises to the membrane. It carries out the reaction L-seryl-[protein] + ATP = O-phospho-L-seryl-[protein] + ADP + H(+). The catalysed reaction is L-threonyl-[protein] + ATP = O-phospho-L-threonyl-[protein] + ADP + H(+). This is Cysteine-rich receptor-like protein kinase 11 (CRK11) from Arabidopsis thaliana (Mouse-ear cress).